Here is a 333-residue protein sequence, read N- to C-terminus: tRNA N6-adenosine threonylcarbamoyltransferase (333 aa).

Positions 118 and 122 each coordinate Fe cation. Substrate is bound by residues 140–144 (VVSGG), D173, G186, and N274. D298 contacts Fe cation.

Belongs to the KAE1 / TsaD family. Requires Fe(2+) as cofactor.

Its subcellular location is the cytoplasm. It catalyses the reaction L-threonylcarbamoyladenylate + adenosine(37) in tRNA = N(6)-L-threonylcarbamoyladenosine(37) in tRNA + AMP + H(+). In terms of biological role, required for the formation of a threonylcarbamoyl group on adenosine at position 37 (t(6)A37) in tRNAs that read codons beginning with adenine. Is involved in the transfer of the threonylcarbamoyl moiety of threonylcarbamoyl-AMP (TC-AMP) to the N6 group of A37, together with TsaE and TsaB. TsaD likely plays a direct catalytic role in this reaction. The sequence is that of tRNA N6-adenosine threonylcarbamoyltransferase from Deinococcus geothermalis (strain DSM 11300 / CIP 105573 / AG-3a).